We begin with the raw amino-acid sequence, 122 residues long: Basic phospholipase A2 homolog (122 aa).

7 cysteine pairs are disulfide-bonded: C26/C115, C28/C44, C43/C95, C49/C122, C50/C88, C57/C81, and C75/C86. The important for membrane-damaging activities in eukaryotes and bacteria; heparin-binding stretch occupies residues 105-117 (KRYMTYPNILCSS).

The protein belongs to the phospholipase A2 family. Group II subfamily. N49 sub-subfamily. In terms of tissue distribution, expressed by the venom gland.

It is found in the secreted. In Gloydius halys (Chinese water mocassin), this protein is Basic phospholipase A2 homolog.